The primary structure comprises 394 residues: Elongation factor Tu (394 aa).

In terms of domain architecture, tr-type G spans 10-204; sequence KPHVNVGTIG…AVDEWIPTPE (195 aa). Residues 19–26 are G1; it reads GHIDHGKT. GTP is bound at residue 19–26; the sequence is GHIDHGKT. Threonine 26 lines the Mg(2+) pocket. A G2 region spans residues 60 to 64; sequence GITIN. Residues 81-84 form a G3 region; it reads DCPG. GTP-binding positions include 81-85 and 136-139; these read DCPGH and NKCD. The tract at residues 136–139 is G4; sequence NKCD. The segment at 174-176 is G5; sequence SAL.

This sequence belongs to the TRAFAC class translation factor GTPase superfamily. Classic translation factor GTPase family. EF-Tu/EF-1A subfamily. Monomer.

The protein localises to the cytoplasm. The catalysed reaction is GTP + H2O = GDP + phosphate + H(+). Its function is as follows. GTP hydrolase that promotes the GTP-dependent binding of aminoacyl-tRNA to the A-site of ribosomes during protein biosynthesis. The chain is Elongation factor Tu from Mycoplasma pneumoniae (strain ATCC 29342 / M129 / Subtype 1) (Mycoplasmoides pneumoniae).